Reading from the N-terminus, the 139-residue chain is Large ribosomal subunit protein uL16 (139 aa).

Residues 1 to 21 (MLSPRKTKFRKQHRGRMRGKA) are compositionally biased toward basic residues. The interval 1-23 (MLSPRKTKFRKQHRGRMRGKATR) is disordered.

It belongs to the universal ribosomal protein uL16 family. In terms of assembly, part of the 50S ribosomal subunit.

Binds 23S rRNA and is also seen to make contacts with the A and possibly P site tRNAs. This chain is Large ribosomal subunit protein uL16, found in Acaryochloris marina (strain MBIC 11017).